We begin with the raw amino-acid sequence, 313 residues long: Acetaldehyde dehydrogenase 3 (313 aa).

13–16 contacts NAD(+); sequence SGNI. Catalysis depends on C133, which acts as the Acyl-thioester intermediate. NAD(+)-binding positions include 164–172 and N291; that span reads SAGPGTRAN.

This sequence belongs to the acetaldehyde dehydrogenase family.

The enzyme catalyses acetaldehyde + NAD(+) + CoA = acetyl-CoA + NADH + H(+). The chain is Acetaldehyde dehydrogenase 3 from Paraburkholderia xenovorans (strain LB400).